The sequence spans 198 residues: Recombination protein RecR (198 aa).

The C4-type zinc-finger motif lies at Cys58–Cys73. A Toprim domain is found at Asn81–Pro175.

Belongs to the RecR family.

In terms of biological role, may play a role in DNA repair. It seems to be involved in an RecBC-independent recombinational process of DNA repair. It may act with RecF and RecO. The sequence is that of Recombination protein RecR from Halothermothrix orenii (strain H 168 / OCM 544 / DSM 9562).